The chain runs to 94 residues: Pyrimidine/purine nucleoside phosphorylase (94 aa).

The protein belongs to the nucleoside phosphorylase PpnP family.

It catalyses the reaction a purine D-ribonucleoside + phosphate = a purine nucleobase + alpha-D-ribose 1-phosphate. It carries out the reaction adenosine + phosphate = alpha-D-ribose 1-phosphate + adenine. The catalysed reaction is cytidine + phosphate = cytosine + alpha-D-ribose 1-phosphate. The enzyme catalyses guanosine + phosphate = alpha-D-ribose 1-phosphate + guanine. It catalyses the reaction inosine + phosphate = alpha-D-ribose 1-phosphate + hypoxanthine. It carries out the reaction thymidine + phosphate = 2-deoxy-alpha-D-ribose 1-phosphate + thymine. The catalysed reaction is uridine + phosphate = alpha-D-ribose 1-phosphate + uracil. The enzyme catalyses xanthosine + phosphate = alpha-D-ribose 1-phosphate + xanthine. Functionally, catalyzes the phosphorolysis of diverse nucleosides, yielding D-ribose 1-phosphate and the respective free bases. Can use uridine, adenosine, guanosine, cytidine, thymidine, inosine and xanthosine as substrates. Also catalyzes the reverse reactions. The protein is Pyrimidine/purine nucleoside phosphorylase of Pectobacterium carotovorum subsp. carotovorum (strain PC1).